We begin with the raw amino-acid sequence, 547 residues long: Signal recognition particle receptor subunit alpha homolog (547 aa).

Residues 124-174 (LENETDTKSLPVEANNDNSARKKNEYEMKKKGAQSKQTNAPKKGKKQLRKW) form a disordered region. A compositionally biased stretch (basic and acidic residues) spans 142–153 (SARKKNEYEMKK). Residues 343-546 (YTISLIGVNG…SVDWVVDQLM (204 aa)) are NG domain. Residues 349 to 356 (GVNGVGKS), 437 to 441 (DTAGR), and 498 to 501 (SKVD) contribute to the GTP site.

Belongs to the GTP-binding SRP family. As to quaternary structure, heterodimer of an alpha and a beta chain.

The protein localises to the endoplasmic reticulum membrane. Component of the SRP (signal recognition particle) receptor (SR). Ensures, in conjunction with the signal recognition particle, the correct targeting of the nascent secretory proteins to the endoplasmic reticulum membrane system. GTP hydrolysis may enhance the fidelity of and provide unidirectionality to the targeting reaction. This chain is Signal recognition particle receptor subunit alpha homolog (srp101), found in Schizosaccharomyces pombe (strain 972 / ATCC 24843) (Fission yeast).